The primary structure comprises 69 residues: Toxin CSTX-11 (69 aa).

Intrachain disulfides connect Cys-6–Cys-21, Cys-13–Cys-30, Cys-20–Cys-47, and Cys-32–Cys-45.

In terms of tissue distribution, expressed by the venom gland.

It localises to the secreted. It is found in the target cell membrane. Its function is as follows. Spider venom toxin that shows calcium channel blocking activity and exhibits cytolytic activity by affecting the outer leaflet curvature and/or pore formation across the membrane. It blocks L-type calcium channels (Cav1/CACNA1) in mammalian neurons at nanomolar concentrations. Furthermore, it produces a slow voltage-independent block of mid/low and high voltage-activated calcium channels in cockroach neurons. Potassium ions, histamine, M-ctenitoxin-Cs1a (AC P83619), CSTX-9 (AC P58604), and CSTX-13 (AC P83919) synergistically increase the insecticidal activity of this toxin. In vivo, it causes paralysis in blow flies and provokes death in drosophila. The sequence is that of Toxin CSTX-11 from Cupiennius salei (American wandering spider).